The sequence spans 147 residues: MRALIQRVLEAKVEVDGQTTGEIKKGLLVFLGIGRDDTLATGQKLIDKILKYRIFDDEQGKMGWNVSQANGGILLVSQFTLMAQTQKGLRPDFGPAMPPSDAKALYEQLVEYTRSQFENVQTGIFAADMKVHLINDGPVTFNLEVEA.

Positions 137-138 match the Gly-cisPro motif, important for rejection of L-amino acids motif; that stretch reads GP.

The protein belongs to the DTD family. In terms of assembly, homodimer.

It localises to the cytoplasm. The catalysed reaction is glycyl-tRNA(Ala) + H2O = tRNA(Ala) + glycine + H(+). It catalyses the reaction a D-aminoacyl-tRNA + H2O = a tRNA + a D-alpha-amino acid + H(+). Its function is as follows. An aminoacyl-tRNA editing enzyme that deacylates mischarged D-aminoacyl-tRNAs. Also deacylates mischarged glycyl-tRNA(Ala), protecting cells against glycine mischarging by AlaRS. Acts via tRNA-based rather than protein-based catalysis; rejects L-amino acids rather than detecting D-amino acids in the active site. By recycling D-aminoacyl-tRNA to D-amino acids and free tRNA molecules, this enzyme counteracts the toxicity associated with the formation of D-aminoacyl-tRNA entities in vivo and helps enforce protein L-homochirality. The sequence is that of D-aminoacyl-tRNA deacylase from Acinetobacter baumannii (strain ATCC 17978 / DSM 105126 / CIP 53.77 / LMG 1025 / NCDC KC755 / 5377).